The chain runs to 125 residues: Alpha-endosulfine (125 aa).

Over residues 1-37 (MSDKYIGDSHLEETGEEKQDSQEKEAVTPEKAEEQKL) the composition is skewed to basic and acidic residues. Residues 1–52 (MSDKYIGDSHLEETGEEKQDSQEKEAVTPEKAEEQKLKAKYPNLGQKPGGSD) are disordered. A Phosphothreonine; by CDK2 modification is found at threonine 28. Residue serine 67 is modified to Phosphoserine; by GWL. Positions 86–107 (GPDKNLVTGDHIPTPQDLPQRK) are disordered. Threonine 99 carries the phosphothreonine; by CDK2 modification. A Phosphoserine; by PKA modification is found at serine 109.

It belongs to the endosulfine family. As to quaternary structure, interacts (when phosphorylated at Ser-67) with ppp2r2d. Phosphorylation at Ser-67 by gwl during mitosis is essential for interaction with PPP2R2D (PR55-delta) and subsequent inactivation of PP2A. Phosphorylated by PKA.

It localises to the cytoplasm. Its function is as follows. Protein phosphatase inhibitor that specifically inhibits protein phosphatase 2A (PP2A) during mitosis. When phosphorylated at Ser-67 during mitosis, specifically interacts with ppp2r2d (PR55-delta) and inhibits its activity, leading to inactivation of PP2A, an essential condition to keep cyclin-B1-CDK1 activity high during M phase. The protein is Alpha-endosulfine (ensa) of Xenopus laevis (African clawed frog).